We begin with the raw amino-acid sequence, 380 residues long: Homeobox protein ceh-6 (380 aa).

A compositionally biased stretch (low complexity) spans 1–25; it reads MLIPSSSSIPSSLSASASDSEPSSL. Disordered stretches follow at residues 1–31, 167–190, and 265–286; these read MLIP…SGIS, SGSV…SEQT, and GSPN…KKRT. Positions 187–261 constitute a POU-specific domain; sequence SEQTCPDDLE…LLFKWLEEAD (75 aa). The homeobox DNA-binding region spans 281–340; that stretch reads KRKKRTSIEVNVKSRLEFHFQSNQKPNAQEITQVAMELQLEKEVVRVWFCNRRQKEKRIA.

This sequence belongs to the POU transcription factor family. Class-3 subfamily. As to quaternary structure, interacts with egl-27, sox-2 and sem-4. Interacts with wdr-5.1. In terms of tissue distribution, expressed in a series of neurons in the ring ganglia, excretory cell, dividing neuroblasts in the ventral cord and rectal cells.

The protein localises to the nucleus. Functionally, vital for embryonic development and essential for the proper function of the excretory cell. Required for the transdifferentiation of the Y rectal epithelial cell to the PDA motor neuron during larval development. The chain is Homeobox protein ceh-6 from Caenorhabditis elegans.